Consider the following 203-residue polypeptide: Small ribosomal subunit protein uS10m (203 aa).

The N-terminal 14 residues, M1–T14, are a transit peptide targeting the mitochondrion. S193 is subject to Phosphoserine.

The protein belongs to the universal ribosomal protein uS10 family. Component of the mitochondrial small ribosomal subunit (mt-SSU). Mature yeast 74S mitochondrial ribosomes consist of a small (37S) and a large (54S) subunit. The 37S small subunit contains a 15S ribosomal RNA (15S mt-rRNA) and 34 different proteins. The 54S large subunit contains a 21S rRNA (21S mt-rRNA) and 46 different proteins.

It localises to the mitochondrion. Its function is as follows. Component of the mitochondrial ribosome (mitoribosome), a dedicated translation machinery responsible for the synthesis of mitochondrial genome-encoded proteins, including at least some of the essential transmembrane subunits of the mitochondrial respiratory chain. The mitoribosomes are attached to the mitochondrial inner membrane and translation products are cotranslationally integrated into the membrane. The chain is Small ribosomal subunit protein uS10m (RSM10) from Saccharomyces cerevisiae (strain ATCC 204508 / S288c) (Baker's yeast).